The chain runs to 274 residues: Tail assembly protein Gp25 (274 aa).

The tract at residues 221–250 (NRDPKKPKPKAPKAYPRPDDFEKTTPKPGS) is disordered. Positions 236–245 (PRPDDFEKTT) are enriched in basic and acidic residues.

It belongs to the L5likevirus tail assembly protein family. In terms of assembly, interacts with tail assembly protein Gp24 and tape measure protein.

Functionally, promotes tail assembly by creating a scaffold for the tail tube proteins. The tail assembly proteins Gp24 and Gp25 would wrap the linear tape measure protein to create a tail assembly scaffold. It would allow polymerization of tail tube protein during which Gp24 and Gp25 are released and therefore are absent from the mature virion. The tail assembly protein Gp25 is produced by a rare -1 ribosomal frameshift. The ratio Gp24/Gp25 is important for proper tail assembly. This is Tail assembly protein Gp25 (25) from Mycobacterium phage D29 (Mycobacteriophage D29).